Here is a 338-residue protein sequence, read N- to C-terminus: Lipoate-protein ligase A (338 aa).

The 188-residue stretch at 29–216 (PATQRVLFLW…AFFAHYGERV (188 aa)) folds into the BPL/LPL catalytic domain. Residues arginine 71, 76 to 79 (GAVF), and lysine 134 contribute to the ATP site. (R)-lipoate is bound at residue lysine 134.

This sequence belongs to the LplA family. Monomer.

The protein localises to the cytoplasm. The catalysed reaction is L-lysyl-[lipoyl-carrier protein] + (R)-lipoate + ATP = N(6)-[(R)-lipoyl]-L-lysyl-[lipoyl-carrier protein] + AMP + diphosphate + H(+). It participates in protein modification; protein lipoylation via exogenous pathway; protein N(6)-(lipoyl)lysine from lipoate: step 1/2. Its pathway is protein modification; protein lipoylation via exogenous pathway; protein N(6)-(lipoyl)lysine from lipoate: step 2/2. Its function is as follows. Catalyzes both the ATP-dependent activation of exogenously supplied lipoate to lipoyl-AMP and the transfer of the activated lipoyl onto the lipoyl domains of lipoate-dependent enzymes. This chain is Lipoate-protein ligase A, found in Salmonella choleraesuis (strain SC-B67).